The chain runs to 335 residues: Abasic site processing protein HMCES (335 aa).

The Nucleophile role is filled by cysteine 2. Cysteine 2 carries the thiazolidine linkage to a ring-opened DNA abasic site modification. Residues 24–39 (QGGRKWPNWRDGDSDK) show a composition bias toward basic and acidic residues. The interval 24–51 (QGGRKWPNWRDGDSDKYQPSYNKSPQSN) is disordered. Polar residues predominate over residues 40-51 (YQPSYNKSPQSN). The active site involves glutamate 129. Positions 284–335 (LQNKSPKKEESHSIQSPKLSQFGAPPKKTSAGLMQQWLKKEDGEPSPKRAKK) are disordered. The segment covering 321–335 (LKKEDGEPSPKRAKK) has biased composition (basic and acidic residues).

The protein belongs to the SOS response-associated peptidase family. Post-translationally, ubiquitination of the hmces DNA-protein cross-link by rfwd3 may promotes its degradation.

The protein localises to the chromosome. Its activity is regulated as follows. Formation and reversal of DNA-protein cross-link depends on DNA context. Catalyzes formation of the thiazolidine linkage in presence of abasic sites in single-stranded DNA. Mediates the reversal of the thiazolidine cross-link in presence of double stranded DNA. Its function is as follows. Sensor of abasic sites in single-stranded DNA (ssDNA) required to preserve genome integrity by promoting error-free repair of abasic sites. Acts as an enzyme that recognizes and binds abasic sites in ssDNA at replication forks and chemically modifies the lesion by forming a covalent cross-link with DNA: forms a stable thiazolidine linkage between a ring-opened abasic site and the alpha-amino and sulfhydryl substituents of its N-terminal catalytic cysteine residue. The hmces DNA-protein cross-link is then either reversed or degraded. Hmces is able to catalyze the reversal of its thiazolidine cross-link and cycle between a cross-link and a non-cross-linked state depending on DNA context: mediates self-reversal of the thiazolidine cross-link in double stranded DNA, allowing apex1 to initiate downstream repair of abasic sites. The hmces DNA-protein cross-link can also be degraded by the sprtn metalloprotease following unfolding by the brip1/fancj helicase. Promotes error-free repair of abasic sites by protecting abasic sites from translesion synthesis (TLS) polymerases and endonucleases that are error-prone and would generate mutations and double-strand breaks. Acts as a protease: mediates autocatalytic processing of its N-terminal methionine in order to expose the catalytic cysteine. The hmces DNA-protein cross-link is then either reversed or degraded. According to a model, the HMCES DNA-protein cross-link. This is Abasic site processing protein HMCES from Xenopus tropicalis (Western clawed frog).